Here is a 256-residue protein sequence, read N- to C-terminus: ATP synthase peripheral stalk subunit b, mitochondrial (256 aa).

A mitochondrion-targeting transit peptide spans Met-1–Ala-42. Lys-131 carries the N6-succinyllysine modification. N6-acetyllysine occurs at positions 139, 154, 162, 221, 233, and 244.

It belongs to the eukaryotic ATPase B chain family. Component of the ATP synthase complex composed at least of ATP5F1A/subunit alpha, ATP5F1B/subunit beta, ATP5MC1/subunit c (homooctomer), MT-ATP6/subunit a, MT-ATP8/subunit 8, ATP5ME/subunit e, ATP5MF/subunit f, ATP5MG/subunit g, ATP5MK/subunit k, ATP5MJ/subunit j, ATP5F1C/subunit gamma, ATP5F1D/subunit delta, ATP5F1E/subunit epsilon, ATP5PF/subunit F6, ATP5PB/subunit b, ATP5PD/subunit d, ATP5PO/subunit OSCP. ATP synthase complex consists of a soluble F(1) head domain (subunits alpha(3) and beta(3)) - the catalytic core - and a membrane F(0) domain - the membrane proton channel (subunits c, a, 8, e, f, g, k and j). These two domains are linked by a central stalk (subunits gamma, delta, and epsilon) rotating inside the F1 region and a stationary peripheral stalk (subunits F6, b, d, and OSCP).

The protein localises to the mitochondrion. It localises to the mitochondrion inner membrane. Functionally, subunit b, of the mitochondrial membrane ATP synthase complex (F(1)F(0) ATP synthase or Complex V) that produces ATP from ADP in the presence of a proton gradient across the membrane which is generated by electron transport complexes of the respiratory chain. ATP synthase complex consist of a soluble F(1) head domain - the catalytic core - and a membrane F(1) domain - the membrane proton channel. These two domains are linked by a central stalk rotating inside the F(1) region and a stationary peripheral stalk. During catalysis, ATP synthesis in the catalytic domain of F(1) is coupled via a rotary mechanism of the central stalk subunits to proton translocation. In vivo, can only synthesize ATP although its ATP hydrolase activity can be activated artificially in vitro. Part of the complex F(0) domain. Part of the complex F(0) domain and the peripheric stalk, which acts as a stator to hold the catalytic alpha(3)beta(3) subcomplex and subunit a/ATP6 static relative to the rotary elements. This chain is ATP synthase peripheral stalk subunit b, mitochondrial, found in Bos taurus (Bovine).